Reading from the N-terminus, the 87-residue chain is Small ribosomal subunit protein bS20 (87 aa).

Positions 1–11 (MANHKSALKRI) are enriched in basic residues. The segment at 1 to 23 (MANHKSALKRIKQTEKRTERNRH) is disordered.

The protein belongs to the bacterial ribosomal protein bS20 family.

In terms of biological role, binds directly to 16S ribosomal RNA. The polypeptide is Small ribosomal subunit protein bS20 (Geotalea daltonii (strain DSM 22248 / JCM 15807 / FRC-32) (Geobacter daltonii)).